The sequence spans 430 residues: MQVDLGTVFDATPGVTQDGLERLDERVATAHERIERGRRNNEPGYAALNLPETVDTTTIHDAVASFEDPTAILIVGIGGSALGAATLVDALGDDTAPSVYVLDNVDPASISRILESIPLSETVLNVVSRSGTTAETLSNFLVVREAMTKAGVDWTDRTIVTTGTDGNLRQLAKSESLPALSVPEGVPGRFSVLSTVGLVVAALKGIQISELITGAADAAAELSGSLFETPAYAYGATTYALATRGARTNVMMPYAENLETFAEWFAQLWAESLGKDNRGQTPIRALGATDQHSQLQLYRAGPHNKVITLIRPRNRPSCTIPSTDLDGLSYLGGSDLGSLLDAEFEATEASLVDADIPTIRVEINAIDAQSLGALLYEFEVACICYGELASVPTFTQPAVEWGKRAARGLLGDDKFMEAAAVADKPTLRVE.

The active-site Proton donor is Glu-271. Residues His-292, His-303, and Lys-403 contribute to the active site.

This sequence belongs to the GPI family.

Its subcellular location is the cytoplasm. It catalyses the reaction alpha-D-glucose 6-phosphate = beta-D-fructose 6-phosphate. Its pathway is carbohydrate biosynthesis; gluconeogenesis. It functions in the pathway carbohydrate degradation; glycolysis; D-glyceraldehyde 3-phosphate and glycerone phosphate from D-glucose: step 2/4. Functionally, catalyzes the reversible isomerization of glucose-6-phosphate to fructose-6-phosphate. The polypeptide is Probable glucose-6-phosphate isomerase (Haloquadratum walsbyi (strain DSM 16790 / HBSQ001)).